Reading from the N-terminus, the 293-residue chain is MWGPLIYALLGLAIVAAAFLFVRRSQAKEVVPVADDDDKENGAAADEVNPRQAGDQGHTDDEDGEEGNEGLKNFMYDENGKKLGVKKARKLQEKEERRRRNEEMAQAREQAKLLQHQEEEERKEREAEEAEDERQREAELEREREAQRQKELEEYNSLKSMFVVEESGELDVDHEAQAQSLLNEFVSFIKEKKVVQLEDLAAHFGLKTQDTIERIQQLEAEGRLTGLTDDRGKYIFISEEELSEVVKFIERRGRITIAELMDNSNRLISLSETDVEFPGDEPAPADVDETTTA.

Topologically, residues 1–6 (MWGPLI) are lumenal. A helical transmembrane segment spans residues 7–27 (YALLGLAIVAAAFLFVRRSQA). The Cytoplasmic portion of the chain corresponds to 28–293 (KEVVPVADDD…PADVDETTTA (266 aa)). Disordered regions lie at residues 30-151 (VVPV…RQKE) and 273-293 (TDVE…TTTA). 2 stretches are compositionally biased toward basic and acidic residues: residues 90–126 (KLQE…KERE) and 133–151 (ERQR…RQKE).

This sequence belongs to the DDRGK1 family.

The protein localises to the endoplasmic reticulum membrane. Functionally, substrate adapter for ufmylation, the covalent attachment of the ubiquitin-like modifier UFM1 to substrate proteins. The chain is DDRGK domain-containing protein 1 from Monosiga brevicollis (Choanoflagellate).